The chain runs to 119 residues: Large ribosomal subunit protein uL18 (119 aa).

It belongs to the universal ribosomal protein uL18 family. Part of the 50S ribosomal subunit; part of the 5S rRNA/L5/L18/L25 subcomplex. Contacts the 5S and 23S rRNAs.

Its function is as follows. This is one of the proteins that bind and probably mediate the attachment of the 5S RNA into the large ribosomal subunit, where it forms part of the central protuberance. The sequence is that of Large ribosomal subunit protein uL18 from Nitrosomonas europaea (strain ATCC 19718 / CIP 103999 / KCTC 2705 / NBRC 14298).